The sequence spans 120 residues: UPF0091 protein PH1455 (120 aa).

The protein belongs to the UPF0091 family.

The protein is UPF0091 protein PH1455 of Pyrococcus horikoshii (strain ATCC 700860 / DSM 12428 / JCM 9974 / NBRC 100139 / OT-3).